A 142-amino-acid chain; its full sequence is D-aminoacyl-tRNA deacylase (142 aa).

The Gly-cisPro motif, important for rejection of L-amino acids motif lies at 133–134 (GP).

This sequence belongs to the DTD family. Homodimer.

The protein resides in the cytoplasm. The enzyme catalyses glycyl-tRNA(Ala) + H2O = tRNA(Ala) + glycine + H(+). It carries out the reaction a D-aminoacyl-tRNA + H2O = a tRNA + a D-alpha-amino acid + H(+). An aminoacyl-tRNA editing enzyme that deacylates mischarged D-aminoacyl-tRNAs. Also deacylates mischarged glycyl-tRNA(Ala), protecting cells against glycine mischarging by AlaRS. Acts via tRNA-based rather than protein-based catalysis; rejects L-amino acids rather than detecting D-amino acids in the active site. By recycling D-aminoacyl-tRNA to D-amino acids and free tRNA molecules, this enzyme counteracts the toxicity associated with the formation of D-aminoacyl-tRNA entities in vivo and helps enforce protein L-homochirality. The polypeptide is D-aminoacyl-tRNA deacylase (Acidothermus cellulolyticus (strain ATCC 43068 / DSM 8971 / 11B)).